A 433-amino-acid polypeptide reads, in one-letter code: MVNVVLGSQWGDEGKGKLVDLLVGKYDIVARCAGGNNAGHTIVVNGVKYDFHMLPSGLVNPNCQNLLGNGVVIHVPSFFKELETLEAKGLKNARSRLFVSSRAHLVFDFHQVTDKLRELELSGRSKDGKNIGTTGKGIGPTYSTKASRSGLRVHHLVNDQPGAWEEFVARYKRLLETRRQRYGDFEYDFEAKPAEYKKLREQLKPFVVDSVVFMHNAIEAKKKILVEGANALMLDIDFGTYPYVTSSNTGIGGVLTGLGIPPRTIDEIYGVVKAYTTRVGEGPFPTEQLNENGEKLQTIGAEFGVTTGRKRRCGWLDLVVLKYSTLINGYTSLNITKLDVLDTFKEIPVGISYSIQGKKLDLFPEDLNILGKVEVEYKVLPGWDQDITKITKYEDLPENAKKYLKYIEDFVGVPVEWVGTGPARESMLHKEIK.

Residues 11 to 17 (GDEGKGK) and 39 to 41 (GHT) contribute to the GTP site. D12 (proton acceptor) is an active-site residue. Residues D12 and G39 each coordinate Mg(2+). Residues 12 to 15 (DEGK), 37 to 40 (NAGH), T134, R148, N230, T245, and R309 contribute to the IMP site. The Proton donor role is filled by H40. Residue 305-311 (VTTGRKR) participates in substrate binding. GTP-binding positions include R311, 337–339 (KLD), and 419–421 (GTG).

Belongs to the adenylosuccinate synthetase family. As to quaternary structure, homodimer. Mg(2+) is required as a cofactor.

Its subcellular location is the cytoplasm. The enzyme catalyses IMP + L-aspartate + GTP = N(6)-(1,2-dicarboxyethyl)-AMP + GDP + phosphate + 2 H(+). It participates in purine metabolism; AMP biosynthesis via de novo pathway; AMP from IMP: step 1/2. Plays an important role in the de novo pathway and in the salvage pathway of purine nucleotide biosynthesis. Catalyzes the first committed step in the biosynthesis of AMP from IMP. The chain is Adenylosuccinate synthetase from Saccharomyces cerevisiae (strain AWRI1631) (Baker's yeast).